Consider the following 331-residue polypeptide: Ketol-acid reductoisomerase (NADP(+)) (331 aa).

The KARI N-terminal Rossmann domain maps to 2–182 (ARMYYDADAN…GGTRAGILET (181 aa)). NADP(+) contacts are provided by residues 25–28 (YGSQ), Ser-51, Ser-53, and 83–86 (DEVQ). Residue His-108 is part of the active site. Gly-134 contacts NADP(+). A KARI C-terminal knotted domain is found at 183 to 328 (SFREETETDL…KDLRAMFSWL (146 aa)). Residues Asp-191, Glu-195, Glu-227, and Glu-231 each contribute to the Mg(2+) site. Ser-252 is a substrate binding site.

The protein belongs to the ketol-acid reductoisomerase family. The cofactor is Mg(2+).

The catalysed reaction is (2R)-2,3-dihydroxy-3-methylbutanoate + NADP(+) = (2S)-2-acetolactate + NADPH + H(+). It catalyses the reaction (2R,3R)-2,3-dihydroxy-3-methylpentanoate + NADP(+) = (S)-2-ethyl-2-hydroxy-3-oxobutanoate + NADPH + H(+). It functions in the pathway amino-acid biosynthesis; L-isoleucine biosynthesis; L-isoleucine from 2-oxobutanoate: step 2/4. Its pathway is amino-acid biosynthesis; L-valine biosynthesis; L-valine from pyruvate: step 2/4. Functionally, involved in the biosynthesis of branched-chain amino acids (BCAA). Catalyzes an alkyl-migration followed by a ketol-acid reduction of (S)-2-acetolactate (S2AL) to yield (R)-2,3-dihydroxy-isovalerate. In the isomerase reaction, S2AL is rearranged via a Mg-dependent methyl migration to produce 3-hydroxy-3-methyl-2-ketobutyrate (HMKB). In the reductase reaction, this 2-ketoacid undergoes a metal-dependent reduction by NADPH to yield (R)-2,3-dihydroxy-isovalerate. The chain is Ketol-acid reductoisomerase (NADP(+)) from Crocosphaera subtropica (strain ATCC 51142 / BH68) (Cyanothece sp. (strain ATCC 51142)).